A 241-amino-acid chain; its full sequence is Leucyl/phenylalanyl-tRNA--protein transferase (241 aa).

This sequence belongs to the L/F-transferase family.

Its subcellular location is the cytoplasm. The enzyme catalyses N-terminal L-lysyl-[protein] + L-leucyl-tRNA(Leu) = N-terminal L-leucyl-L-lysyl-[protein] + tRNA(Leu) + H(+). It carries out the reaction N-terminal L-arginyl-[protein] + L-leucyl-tRNA(Leu) = N-terminal L-leucyl-L-arginyl-[protein] + tRNA(Leu) + H(+). It catalyses the reaction L-phenylalanyl-tRNA(Phe) + an N-terminal L-alpha-aminoacyl-[protein] = an N-terminal L-phenylalanyl-L-alpha-aminoacyl-[protein] + tRNA(Phe). Its function is as follows. Functions in the N-end rule pathway of protein degradation where it conjugates Leu, Phe and, less efficiently, Met from aminoacyl-tRNAs to the N-termini of proteins containing an N-terminal arginine or lysine. This Neisseria meningitidis serogroup C (strain 053442) protein is Leucyl/phenylalanyl-tRNA--protein transferase.